Consider the following 117-residue polypeptide: Large ribosomal subunit protein bL20 (117 aa).

The protein belongs to the bacterial ribosomal protein bL20 family.

Its function is as follows. Binds directly to 23S ribosomal RNA and is necessary for the in vitro assembly process of the 50S ribosomal subunit. It is not involved in the protein synthesizing functions of that subunit. The polypeptide is Large ribosomal subunit protein bL20 (Vibrio cholerae serotype O1 (strain ATCC 39541 / Classical Ogawa 395 / O395)).